Consider the following 303-residue polypeptide: Bifunctional protein FolD (303 aa).

Residues 165 to 167 (GRS), Ser-190, and Ile-231 each bind NADP(+).

It belongs to the tetrahydrofolate dehydrogenase/cyclohydrolase family. Homodimer.

It catalyses the reaction (6R)-5,10-methylene-5,6,7,8-tetrahydrofolate + NADP(+) = (6R)-5,10-methenyltetrahydrofolate + NADPH. The enzyme catalyses (6R)-5,10-methenyltetrahydrofolate + H2O = (6R)-10-formyltetrahydrofolate + H(+). The protein operates within one-carbon metabolism; tetrahydrofolate interconversion. Functionally, catalyzes the oxidation of 5,10-methylenetetrahydrofolate to 5,10-methenyltetrahydrofolate and then the hydrolysis of 5,10-methenyltetrahydrofolate to 10-formyltetrahydrofolate. This Prochlorococcus marinus (strain NATL2A) protein is Bifunctional protein FolD.